Consider the following 641-residue polypeptide: Mannosyl-oligosaccharide 1,2-alpha-mannosidase IB (641 aa).

Threonine 2 is subject to N-acetylthreonine. Topologically, residues 2 to 36 are cytoplasmic; that stretch reads TTPALLPLSGRRIPPLNLGPPSFPHHRATLRLSEK. Residues 37–57 form a helical; Signal-anchor for type II membrane protein membrane-spanning segment; that stretch reads FILLLILSAFITLCFGAFFFL. The Lumenal segment spans residues 58-641; that stretch reads PDSSKHKRFD…TTLSGNPAVR (584 aa). The interval 153-175 is disordered; the sequence is NKPLPPVPIPNLVGIRGGDPEDN. Cysteine 462 and cysteine 494 are oxidised to a cystine. The active-site Proton donor is glutamate 508. A Ca(2+)-binding site is contributed by threonine 619. Asparagine 631 is a glycosylation site (N-linked (GlcNAc...) asparagine).

This sequence belongs to the glycosyl hydrolase 47 family. Ca(2+) serves as cofactor. Highest levels of expression in placenta and testis.

The protein localises to the golgi apparatus membrane. The catalysed reaction is N(4)-(alpha-D-Man-(1-&gt;2)-alpha-D-Man-(1-&gt;2)-alpha-D-Man-(1-&gt;3)-[alpha-D-Man-(1-&gt;2)-alpha-D-Man-(1-&gt;3)-[alpha-D-Man-(1-&gt;2)-alpha-D-Man-(1-&gt;6)]-alpha-D-Man-(1-&gt;6)]-beta-D-Man-(1-&gt;4)-beta-D-GlcNAc-(1-&gt;4)-beta-D-GlcNAc)-L-asparaginyl-[protein] (N-glucan mannose isomer 9A1,2,3B1,2,3) + 4 H2O = N(4)-(alpha-D-Man-(1-&gt;3)-[alpha-D-Man-(1-&gt;3)-[alpha-D-Man-(1-&gt;6)]-alpha-D-Man-(1-&gt;6)]-beta-D-Man-(1-&gt;4)-beta-D-GlcNAc-(1-&gt;4)-beta-D-GlcNAc)-L-asparaginyl-[protein] (N-glucan mannose isomer 5A1,2) + 4 beta-D-mannose. The enzyme catalyses N(4)-(alpha-D-Man-(1-&gt;2)-alpha-D-Man-(1-&gt;2)-alpha-D-Man-(1-&gt;3)-[alpha-D-Man-(1-&gt;3)-[alpha-D-Man-(1-&gt;2)-alpha-D-Man-(1-&gt;6)]-alpha-D-Man-(1-&gt;6)]-beta-D-Man-(1-&gt;4)-beta-D-GlcNAc-(1-&gt;4)-beta-D-GlcNAc)-L-asparaginyl-[protein] (N-glucan mannose isomer 8A1,2,3B1,3) + 3 H2O = N(4)-(alpha-D-Man-(1-&gt;3)-[alpha-D-Man-(1-&gt;3)-[alpha-D-Man-(1-&gt;6)]-alpha-D-Man-(1-&gt;6)]-beta-D-Man-(1-&gt;4)-beta-D-GlcNAc-(1-&gt;4)-beta-D-GlcNAc)-L-asparaginyl-[protein] (N-glucan mannose isomer 5A1,2) + 3 beta-D-mannose. It functions in the pathway protein modification; protein glycosylation. With respect to regulation, inhibited by both 1-deoxymannojirimycin and kifunensine. Its function is as follows. Involved in the maturation of Asn-linked oligosaccharides. Progressively trim alpha-1,2-linked mannose residues from Man(9)GlcNAc(2) to produce Man(5)GlcNAc(2). The protein is Mannosyl-oligosaccharide 1,2-alpha-mannosidase IB (MAN1A2) of Homo sapiens (Human).